A 561-amino-acid chain; its full sequence is Dihydroxy-acid dehydratase (561 aa).

[2Fe-2S] cluster is bound at residue Cys-50. Asp-82 lines the Mg(2+) pocket. Cys-123 is a [2Fe-2S] cluster binding site. Asp-124 and Lys-125 together coordinate Mg(2+). At Lys-125 the chain carries N6-carboxylysine. Cys-195 lines the [2Fe-2S] cluster pocket. Residue Glu-447 coordinates Mg(2+). Residue Ser-473 is the Proton acceptor of the active site.

This sequence belongs to the IlvD/Edd family. Homodimer. Requires [2Fe-2S] cluster as cofactor. The cofactor is Mg(2+).

The enzyme catalyses (2R)-2,3-dihydroxy-3-methylbutanoate = 3-methyl-2-oxobutanoate + H2O. It carries out the reaction (2R,3R)-2,3-dihydroxy-3-methylpentanoate = (S)-3-methyl-2-oxopentanoate + H2O. It functions in the pathway amino-acid biosynthesis; L-isoleucine biosynthesis; L-isoleucine from 2-oxobutanoate: step 3/4. It participates in amino-acid biosynthesis; L-valine biosynthesis; L-valine from pyruvate: step 3/4. Functions in the biosynthesis of branched-chain amino acids. Catalyzes the dehydration of (2R,3R)-2,3-dihydroxy-3-methylpentanoate (2,3-dihydroxy-3-methylvalerate) into 2-oxo-3-methylpentanoate (2-oxo-3-methylvalerate) and of (2R)-2,3-dihydroxy-3-methylbutanoate (2,3-dihydroxyisovalerate) into 2-oxo-3-methylbutanoate (2-oxoisovalerate), the penultimate precursor to L-isoleucine and L-valine, respectively. This Synechocystis sp. (strain ATCC 27184 / PCC 6803 / Kazusa) protein is Dihydroxy-acid dehydratase.